Reading from the N-terminus, the 308-residue chain is Tetraacyldisaccharide 4'-kinase (308 aa).

63 to 70 (SFGGNGKT) is an ATP binding site.

Belongs to the LpxK family.

The catalysed reaction is a lipid A disaccharide + ATP = a lipid IVA + ADP + H(+). Its pathway is glycolipid biosynthesis; lipid IV(A) biosynthesis; lipid IV(A) from (3R)-3-hydroxytetradecanoyl-[acyl-carrier-protein] and UDP-N-acetyl-alpha-D-glucosamine: step 6/6. In terms of biological role, transfers the gamma-phosphate of ATP to the 4'-position of a tetraacyldisaccharide 1-phosphate intermediate (termed DS-1-P) to form tetraacyldisaccharide 1,4'-bis-phosphate (lipid IVA). The chain is Tetraacyldisaccharide 4'-kinase from Campylobacter jejuni subsp. doylei (strain ATCC BAA-1458 / RM4099 / 269.97).